We begin with the raw amino-acid sequence, 286 residues long: MRLLPRLLLLFLLAFPAAVLLRGGPGGSLALAQDPTEDEEIVEDSIIEDEDDEAEVEEDEPTDLAEDKEEEDVSSEPEASPSADTTILFVKGEDFPANNIVKFLVGFTNKGTEDFIVESLDASFRYPQDYQFYIQNFTALPLNTVVPPQRQATFEYSFIPAEPMGGRPFGLVINLNYKDLNGNVFQDAVFNQTVTVIEREDGLDGETIFMYMFLAGLGLLVVVGLHQLLESRKRKRPIQKVEMGTSSQNDVDMSWIPQETLNQINKASPRRQPRKRAQKRSVGSDE.

A signal peptide spans 1–21 (MRLLPRLLLLFLLAFPAAVLL). Residues 22 to 207 (RGGPGGSLAL…EREDGLDGET (186 aa)) are Lumenal-facing. Over residues 46–75 (IIEDEDDEAEVEEDEPTDLAEDKEEEDVSS) the composition is skewed to acidic residues. The segment at 46–83 (IIEDEDDEAEVEEDEPTDLAEDKEEEDVSSEPEASPSA) is disordered. N-linked (GlcNAc...) asparagine glycosylation is found at asparagine 136 and asparagine 191. The helical transmembrane segment at 208–228 (IFMYMFLAGLGLLVVVGLHQL) threads the bilayer. At 229–286 (LESRKRKRPIQKVEMGTSSQNDVDMSWIPQETLNQINKASPRRQPRKRAQKRSVGSDE) the chain is on the cytoplasmic side. Positions 236–286 (RPIQKVEMGTSSQNDVDMSWIPQETLNQINKASPRRQPRKRAQKRSVGSDE) are disordered. Over residues 244-266 (GTSSQNDVDMSWIPQETLNQINK) the composition is skewed to polar residues. Position 247 is a phosphoserine (serine 247). Residue threonine 260 is modified to Phosphothreonine. Residue serine 268 is modified to Phosphoserine. Over residues 268–279 (SPRRQPRKRAQK) the composition is skewed to basic residues.

Belongs to the TRAP-alpha family. As to quaternary structure, heterotetramer of TRAP-alpha, TRAP-beta, TRAP-delta and TRAP-gamma. Interacts with palmitoylated calnexin (CALX), the interaction is required for efficient folding of glycosylated proteins.

The protein resides in the endoplasmic reticulum membrane. TRAP proteins are part of a complex whose function is to bind calcium to the ER membrane and thereby regulate the retention of ER resident proteins. May be involved in the recycling of the translocation apparatus after completion of the translocation process or may function as a membrane-bound chaperone facilitating folding of translocated proteins. This Mus musculus (Mouse) protein is Translocon-associated protein subunit alpha (Ssr1).